The chain runs to 418 residues: MYTLRFVRENENLMREALRKRQYDESIVDQLLAVDEQRRKEVTSLQELNTRRNELTSVVSKKKKDGTDASQEIELLKKLKEEVSVKETIVSELESKIQEILKQLPNIPHESVPTGKDSSENVEVRRWGEPRTFAFEPKPHWEIGENMNILDFQRAAKISGSRFVAYQGLGALLELTLINFMVWTHVKDHGYTFVIPPYLVKSDTAFGTGHLPKFKDEMYYCPEDDLYLIPTAELPMVAYHSGEVLVEAELPKRYVAYSACFRREAGAAGRDTRGLIRRHQFNKVELIKITKPEDSYNELESMVSDAESILQLLELPYRVVLLCTGDMGFAAAKTYDIEVWMPSYGRYVEISSCSNTEGFQARRANVRMRRPDGSNDYPHMLNGSGLAVGRTLAAIMENYQREDGTFDIPQALRAFMFA.

Thr-231–Glu-233 lines the L-serine pocket. An ATP-binding site is contributed by Arg-262–Glu-264. Glu-285 is a binding site for L-serine. Residue Glu-349 to Ser-352 coordinates ATP. Ser-384 contacts L-serine.

This sequence belongs to the class-II aminoacyl-tRNA synthetase family. Type-1 seryl-tRNA synthetase subfamily. Homodimer. The tRNA molecule binds across the dimer.

It is found in the cytoplasm. It catalyses the reaction tRNA(Ser) + L-serine + ATP = L-seryl-tRNA(Ser) + AMP + diphosphate + H(+). The catalysed reaction is tRNA(Sec) + L-serine + ATP = L-seryl-tRNA(Sec) + AMP + diphosphate + H(+). It participates in aminoacyl-tRNA biosynthesis; selenocysteinyl-tRNA(Sec) biosynthesis; L-seryl-tRNA(Sec) from L-serine and tRNA(Sec): step 1/1. In terms of biological role, catalyzes the attachment of serine to tRNA(Ser). Is also able to aminoacylate tRNA(Sec) with serine, to form the misacylated tRNA L-seryl-tRNA(Sec), which will be further converted into selenocysteinyl-tRNA(Sec). In Coprothermobacter proteolyticus (strain ATCC 35245 / DSM 5265 / OCM 4 / BT), this protein is Serine--tRNA ligase.